Here is a 266-residue protein sequence, read N- to C-terminus: Thymidylate synthase (266 aa).

Arg-24 contributes to the dUMP binding site. His-54 serves as a coordination point for (6R)-5,10-methylene-5,6,7,8-tetrahydrofolate. 129–130 contacts dUMP; that stretch reads RR. The Nucleophile role is filled by Cys-149. Residues 169 to 172, Asn-180, and 210 to 212 each bind dUMP; these read RSAD and HIY. Asp-172 is a (6R)-5,10-methylene-5,6,7,8-tetrahydrofolate binding site. (6R)-5,10-methylene-5,6,7,8-tetrahydrofolate is bound at residue Ala-265.

It belongs to the thymidylate synthase family. Bacterial-type ThyA subfamily. Homodimer.

It is found in the cytoplasm. It catalyses the reaction dUMP + (6R)-5,10-methylene-5,6,7,8-tetrahydrofolate = 7,8-dihydrofolate + dTMP. Its pathway is pyrimidine metabolism; dTTP biosynthesis. In terms of biological role, catalyzes the reductive methylation of 2'-deoxyuridine-5'-monophosphate (dUMP) to 2'-deoxythymidine-5'-monophosphate (dTMP) while utilizing 5,10-methylenetetrahydrofolate (mTHF) as the methyl donor and reductant in the reaction, yielding dihydrofolate (DHF) as a by-product. This enzymatic reaction provides an intracellular de novo source of dTMP, an essential precursor for DNA biosynthesis. The sequence is that of Thymidylate synthase from Mycobacterium ulcerans (strain Agy99).